The chain runs to 94 residues: Ribonuclease P protein component 1 (94 aa).

Belongs to the eukaryotic/archaeal RNase P protein component 1 family. Consists of a catalytic RNA component and at least 4-5 protein subunits.

It is found in the cytoplasm. It catalyses the reaction Endonucleolytic cleavage of RNA, removing 5'-extranucleotides from tRNA precursor.. Its function is as follows. Part of ribonuclease P, a protein complex that generates mature tRNA molecules by cleaving their 5'-ends. The polypeptide is Ribonuclease P protein component 1 (Thermofilum pendens (strain DSM 2475 / Hrk 5)).